The chain runs to 494 residues: 3-octaprenyl-4-hydroxybenzoate carboxy-lyase (494 aa).

Position 172 (asparagine 172) interacts with Mn(2+). Prenylated FMN contacts are provided by residues 175–177, 189–191, and 194–195; these read IYR, RWL, and RG. Glutamate 238 contributes to the Mn(2+) binding site. Catalysis depends on aspartate 294, which acts as the Proton donor.

This sequence belongs to the UbiD family. In terms of assembly, homohexamer. Prenylated FMN is required as a cofactor. Requires Mn(2+) as cofactor.

The protein resides in the cell membrane. The enzyme catalyses a 4-hydroxy-3-(all-trans-polyprenyl)benzoate + H(+) = a 2-(all-trans-polyprenyl)phenol + CO2. The protein operates within cofactor biosynthesis; ubiquinone biosynthesis. Its function is as follows. Catalyzes the decarboxylation of 3-octaprenyl-4-hydroxy benzoate to 2-octaprenylphenol, an intermediate step in ubiquinone biosynthesis. This chain is 3-octaprenyl-4-hydroxybenzoate carboxy-lyase, found in Janthinobacterium sp. (strain Marseille) (Minibacterium massiliensis).